We begin with the raw amino-acid sequence, 507 residues long: Maturase K (507 aa).

It belongs to the intron maturase 2 family. MatK subfamily.

Its subcellular location is the plastid. The protein resides in the chloroplast. Functionally, usually encoded in the trnK tRNA gene intron. Probably assists in splicing its own and other chloroplast group II introns. The protein is Maturase K of Fagopyrum tataricum (Tartarian buckwheat).